Reading from the N-terminus, the 278-residue chain is Putative glycosyltransferase EpsE (278 aa).

The protein belongs to the glycosyltransferase 2 family.

Functionally, may be involved in the production of the exopolysaccharide (EPS) component of the extracellular matrix during biofilm formation. EPS is responsible for the adhesion of chains of cells into bundles. Required for biofilm maintenance. The polypeptide is Putative glycosyltransferase EpsE (epsE) (Bacillus subtilis (strain 168)).